Reading from the N-terminus, the 195-residue chain is Large ribosomal subunit protein uL18 (195 aa).

This sequence belongs to the universal ribosomal protein uL18 family. As to quaternary structure, part of the 50S ribosomal subunit. Contacts the 5S and 23S rRNAs.

This is one of the proteins that bind and probably mediate the attachment of the 5S RNA into the large ribosomal subunit, where it forms part of the central protuberance. The chain is Large ribosomal subunit protein uL18 from Nanoarchaeum equitans (strain Kin4-M).